Reading from the N-terminus, the 449-residue chain is RNA binding protein fox-1 homolog 2 (449 aa).

Residues 1 to 21 show a composition bias toward low complexity; sequence MAEGGQAQQQPPQLGPGAAAR. Residues 1–186 form a disordered region; sequence MAEGGQAQQQ…STPKRLHVSN (186 aa). Polar residues-rich tracts occupy residues 77–86 and 118–138; these read QGNQEPTTTP and YAGQTSEHNLTLYGSTQPHGE. Residues 139–176 are compositionally biased toward low complexity; it reads QSSNSPSNQNGSLTQTEGGAQTDGQQSQTQSSENSESK. One can recognise an RRM domain in the interval 180–256; the sequence is KRLHVSNIPF…RKIEVNNATA (77 aa). Arginine 236, glycine 241, tyrosine 268, and lysine 273 each carry omega-N-methylarginine. 2 positions are modified to asymmetric dimethylarginine: glutamate 285 and proline 317. An omega-N-methylarginine mark is found at leucine 318, leucine 323, alanine 336, arginine 340, and glycine 341. Asymmetric dimethylarginine occurs at positions 356 and 388. Asymmetric dimethylarginine; alternate is present on residues arginine 440 and arginine 445. An omega-N-methylarginine; alternate mark is found at arginine 440 and arginine 445.

In terms of assembly, interacts with ER-alpha N-terminal activation domain. Interacts with RBPMS; the interaction allows cooperative assembly of stable cell-specific alternative splicing regulatory complexes. In terms of tissue distribution, detected in brain neurons (at protein level). Detected in heart, brain, embryo, lung, liver, kidney and ovary.

The protein localises to the nucleus. It is found in the cytoplasm. RNA-binding protein that regulates alternative splicing events by binding to 5'-UGCAUGU-3' elements. Prevents binding of U2AF2 to the 3'-splice site. Regulates alternative splicing of tissue-specific exons and of differentially spliced exons during erythropoiesis. Seems to act as a coregulatory factor of ER-alpha. Together with RNA binding proteins RBPMS and MBNL1/2, activates vascular smooth muscle cells alternative splicing events. This Mus musculus (Mouse) protein is RNA binding protein fox-1 homolog 2 (Rbfox2).